Reading from the N-terminus, the 53-residue chain is Large ribosomal subunit protein eL24 (53 aa).

Zn(2+) is bound by residues cysteine 4, cysteine 7, cysteine 30, and cysteine 34. The segment at 4 to 34 adopts a C4-type zinc-finger fold; that stretch reads CSFCNKEIEEGTGKMYVKKDGSIYFFCSSKC.

Belongs to the eukaryotic ribosomal protein eL24 family. Part of the 50S ribosomal subunit. Forms a cluster with proteins L3 and L14. Zn(2+) serves as cofactor.

In terms of biological role, binds to the 23S rRNA. This is Large ribosomal subunit protein eL24 from Methanobrevibacter smithii (strain ATCC 35061 / DSM 861 / OCM 144 / PS).